The sequence spans 304 residues: MADTARSVASGMVVALQANYLEVELDVAPDGCPGRLLCTRRTRLSHRGEAVYVGDRVRVEAIDPGQGRAVVAEVEPRHSFLTRPPVANVSLVAVVLAVEQPSFDPDQASRFLLTAERTGLEVILLLTKTDLLSAAALERLVTRLQGWGYDPLAFSSAAGTGIDALRQRLAGAQLSVLCGPSGVGKSSLLNQLCPDLQLRTAAVSGRLQRGRHTTRHVELFPLGPSARVADTPGFNRPDLPEDPQELGVLFPELRKQLDPWPCRFRDCLHRGEPGCGVSTDWERYSLYEAALIEQSSLSRPSRGG.

One can recognise a CP-type G domain in the interval 78 to 237 (HSFLTRPPVA…VADTPGFNRP (160 aa)). GTP contacts are provided by residues 127–130 (TKTD) and 179–187 (GPSGVGKSS). The Zn(2+) site is built by C262, C267, H269, and C275.

The protein belongs to the TRAFAC class YlqF/YawG GTPase family. RsgA subfamily. As to quaternary structure, monomer. Associates with 30S ribosomal subunit, binds 16S rRNA. It depends on Zn(2+) as a cofactor.

The protein resides in the cytoplasm. Its function is as follows. One of several proteins that assist in the late maturation steps of the functional core of the 30S ribosomal subunit. Helps release RbfA from mature subunits. May play a role in the assembly of ribosomal proteins into the subunit. Circularly permuted GTPase that catalyzes slow GTP hydrolysis, GTPase activity is stimulated by the 30S ribosomal subunit. The polypeptide is Small ribosomal subunit biogenesis GTPase RsgA (Synechococcus sp. (strain CC9605)).